A 513-amino-acid polypeptide reads, in one-letter code: Xylose import ATP-binding protein XylG (513 aa).

ABC transporter domains lie at leucine 5–glutamate 242 and leucine 259–glutamate 505. Glycine 37–serine 44 contributes to the ATP binding site.

This sequence belongs to the ABC transporter superfamily. Xylose importer (TC 3.A.1.2.4) family. As to quaternary structure, the complex is composed of two ATP-binding proteins (XylG), two transmembrane proteins (XylH) and a solute-binding protein (XylF).

It is found in the cell inner membrane. It carries out the reaction D-xylose(out) + ATP + H2O = D-xylose(in) + ADP + phosphate + H(+). Part of the ABC transporter complex XylFGH involved in xylose import. Responsible for energy coupling to the transport system. This Shigella boydii serotype 4 (strain Sb227) protein is Xylose import ATP-binding protein XylG.